The following is a 490-amino-acid chain: Ketol-acid reductoisomerase (NADP(+)) (490 aa).

One can recognise a KARI N-terminal Rossmann domain in the interval 15–208 (INLQKCKLID…GSHHAGILHS (194 aa)). NADP(+)-binding positions include 45 to 48 (CGSQ), arginine 68, serine 78, and 108 to 110 (DKQ). Histidine 132 is a catalytic residue. Glycine 158 contributes to the NADP(+) binding site. 2 KARI C-terminal knotted domains span residues 209-344 (SFIA…KCNI) and 345-484 (YYKQ…MTSM). 4 residues coordinate Mg(2+): aspartate 217, glutamate 221, glutamate 389, and glutamate 393. Residue serine 414 coordinates substrate.

The protein belongs to the ketol-acid reductoisomerase family. Requires Mg(2+) as cofactor.

The catalysed reaction is (2R)-2,3-dihydroxy-3-methylbutanoate + NADP(+) = (2S)-2-acetolactate + NADPH + H(+). The enzyme catalyses (2R,3R)-2,3-dihydroxy-3-methylpentanoate + NADP(+) = (S)-2-ethyl-2-hydroxy-3-oxobutanoate + NADPH + H(+). It functions in the pathway amino-acid biosynthesis; L-isoleucine biosynthesis; L-isoleucine from 2-oxobutanoate: step 2/4. It participates in amino-acid biosynthesis; L-valine biosynthesis; L-valine from pyruvate: step 2/4. Involved in the biosynthesis of branched-chain amino acids (BCAA). Catalyzes an alkyl-migration followed by a ketol-acid reduction of (S)-2-acetolactate (S2AL) to yield (R)-2,3-dihydroxy-isovalerate. In the isomerase reaction, S2AL is rearranged via a Mg-dependent methyl migration to produce 3-hydroxy-3-methyl-2-ketobutyrate (HMKB). In the reductase reaction, this 2-ketoacid undergoes a metal-dependent reduction by NADPH to yield (R)-2,3-dihydroxy-isovalerate. This is Ketol-acid reductoisomerase (NADP(+)) from Buchnera aphidicola subsp. Melaphis rhois.